A 433-amino-acid polypeptide reads, in one-letter code: Legumain (433 aa).

Positions methionine 1 to alanine 17 are cleaved as a signal peptide. Asparagine 91 is a glycosylation site (N-linked (GlcNAc...) asparagine). Histidine 148 is a catalytic residue. N-linked (GlcNAc...) asparagine glycosylation is present at asparagine 167. Catalysis depends on cysteine 189, which acts as the Nucleophile. Residues asparagine 263 and asparagine 272 are each glycosylated (N-linked (GlcNAc...) asparagine). The propeptide occupies aspartate 324–tyrosine 433. 2 disulfide bridges follow: cysteine 378/cysteine 412 and cysteine 390/cysteine 429.

It belongs to the peptidase C13 family. In terms of assembly, homodimer before autocatalytic removal of the propeptide. Monomer after autocatalytic processing. May interact with integrins. Post-translationally, activated by autocatalytic processing at pH 4.

It is found in the lysosome. It carries out the reaction Hydrolysis of proteins and small molecule substrates at -Asn-|-Xaa- bonds.. In terms of biological role, has a strict specificity for hydrolysis of asparaginyl bonds. Can also cleave aspartyl bonds slowly, especially under acidic conditions. Involved in the processing of proteins for MHC class II antigen presentation in the lysosomal/endosomal system. Also involved in MHC class I antigen presentation in cross-presenting dendritic cells by mediating cleavage and maturation of Perforin-2 (MPEG1), thereby promoting antigen translocation in the cytosol. Required for normal lysosomal protein degradation in renal proximal tubules. Required for normal degradation of internalized EGFR. Plays a role in the regulation of cell proliferation via its role in EGFR degradation. The sequence is that of Legumain (LGMN) from Pongo abelii (Sumatran orangutan).